Here is a 445-residue protein sequence, read N- to C-terminus: MAALSHRLRSFTRRFSSTRTTQRSGGGANTKVPILYTSPDIDSDPVTLQLFSWGRGASGQLGGGIEEIRMYPSPVANLLFRSDQSFSLAQTPGRIDADSSSFRIGISCGLFHSGLTIDGDLWIWGKGDGGRLGFGQENSVFVPNLNPLFEEHSIRCIALGGLHSVALTHQGDVFTWGYGGFGALGHKVYTRELVPRRVDDSWDCKISAIATSGTHTAAITESGELYMWGREEGDGRLGLGPGRGPNEGGGLSVPSKVKALTVPVASVSCGGFFTMALTKEGQLWNWGANSNYELGRGDNLGGWEPMPVPSLEGVRITQIACGGYHSLALTEEGKVLSWGHGGHGQLGSSSLRNQKVPTEIEALADKKIVFIASGGSSSAAITDGGELWMWGNAKDFQLGVPGLPEIQTTPVEVNFLTEEDECQPHKVISISIGASHALCLVSRSP.

The transit peptide at 1-22 (MAALSHRLRSFTRRFSSTRTTQ) directs the protein to the mitochondrion. RCC1 repeat units follow at residues 47-101 (TLQL…DSSS), 118-169 (DGDL…ALTH), 171-221 (GDVF…AITE), 222-279 (SGEL…ALTK), 280-331 (EGQL…ALTE), 333-383 (GKVL…AITD), and 385-442 (GELW…CLVS).

In terms of assembly, interacts with ATM. As to expression, mostly expressed in roots and rosette leaves of young seedlings, and, to a lower extent, in the flowers and siliques of mature plants. Preferentially expressed in the vascular tissues.

Its subcellular location is the mitochondrion. Its function is as follows. Regulates DNA damage response (DDR) synergistically with ATM. Together with ATM, involved in the splicing of the ND2/NAD2 mRNA. Required for the accumulation of mitochondrial respiratory chain complex I. Negative regulator of plant responses to abscisic acid (ABA). May have a pivotal role in vegetative growth and the phase transition from vegetative to reproductive growth. This chain is RCC1 domain-containing protein RUG3, mitochondrial, found in Arabidopsis thaliana (Mouse-ear cress).